The following is a 348-amino-acid chain: Trans-L-3-hydroxyproline dehydratase (348 aa).

The Proton acceptor role is filled by Cys101. Substrate contacts are provided by residues 102–103, Asp263, and 268–269; these read GH and GS.

This sequence belongs to the proline racemase family. Homodimer.

The catalysed reaction is trans-3-hydroxy-L-proline = 1-pyrroline-2-carboxylate + H2O. Functionally, catalyzes the dehydration of trans-3-hydroxy-L-proline to delta-1-pyrroline-2-carboxylate (Pyr2C). The sequence is that of Trans-L-3-hydroxyproline dehydratase (l3hypdh) from Xenopus tropicalis (Western clawed frog).